The following is a 129-amino-acid chain: Small ribosomal subunit protein uS9 (129 aa).

Residues 107–129 (SRVVERKKPGKKKARRSPQFSKR) form a disordered region. Over residues 114 to 129 (KPGKKKARRSPQFSKR) the composition is skewed to basic residues.

Belongs to the universal ribosomal protein uS9 family.

In Sulfurovum sp. (strain NBC37-1), this protein is Small ribosomal subunit protein uS9.